Here is a 341-residue protein sequence, read N- to C-terminus: UDP-3-O-acylglucosamine N-acyltransferase (341 aa).

The Proton acceptor role is filled by H239.

This sequence belongs to the transferase hexapeptide repeat family. LpxD subfamily. Homotrimer.

The enzyme catalyses a UDP-3-O-[(3R)-3-hydroxyacyl]-alpha-D-glucosamine + a (3R)-hydroxyacyl-[ACP] = a UDP-2-N,3-O-bis[(3R)-3-hydroxyacyl]-alpha-D-glucosamine + holo-[ACP] + H(+). It participates in bacterial outer membrane biogenesis; LPS lipid A biosynthesis. Catalyzes the N-acylation of UDP-3-O-acylglucosamine using 3-hydroxyacyl-ACP as the acyl donor. Is involved in the biosynthesis of lipid A, a phosphorylated glycolipid that anchors the lipopolysaccharide to the outer membrane of the cell. The sequence is that of UDP-3-O-acylglucosamine N-acyltransferase from Photobacterium profundum (strain SS9).